The following is a 106-amino-acid chain: Urease subunit beta (106 aa).

The protein belongs to the urease beta subunit family. In terms of assembly, heterotrimer of UreA (gamma), UreB (beta) and UreC (alpha) subunits. Three heterotrimers associate to form the active enzyme. The apoenzyme interacts with an accessory complex composed of UreD, UreF and UreG, which is required for the assembly of the nickel containing metallocenter of UreC. The UreE protein may also play a direct role as a metallochaperone in nickel transfer to the urease apoprotein.

It is found in the cytoplasm. The catalysed reaction is urea + 2 H2O + H(+) = hydrogencarbonate + 2 NH4(+). Its pathway is nitrogen metabolism; urea degradation; CO(2) and NH(3) from urea (urease route): step 1/1. The apoenzyme can be activated in vitro in the presence of nickel ions and carbon dioxide, which promotes carboxylation of 'Lys-217' of the UreC (alpha) subunit. The sequence is that of Urease subunit beta from Klebsiella aerogenes (Enterobacter aerogenes).